We begin with the raw amino-acid sequence, 210 residues long: Transcriptional regulator GfcR (210 aa).

The tract at residues 39-60 is disordered; sequence VERSGAATEPEPRAEPEGPDDI. Over residues 48–60 the composition is skewed to basic and acidic residues; the sequence is PEPRAEPEGPDDI.

The protein belongs to the purine/pyrimidine phosphoribosyltransferase family. GfcR subfamily.

Interaction with effectors modulates GfcR activity. 2-keto-3-deoxy-6-phosphogluconate (KDPG), fructose-1,6-bisphosphate (FBP), 2-keto-3-deoxy-6-phosphogalactonate (KDPGal) and glycerol-3-phosphate (G3P), which are intermediates of sugar and glycerol degradation pathways, can act as inducer molecules. Its function is as follows. DNA-binding transcriptional regulator that functions as a regulator of central sugar catabolic pathways. Is both a local regulator of specific steps in the pathways for D-glucose and D-fructose degradation and a global regulator of hexose catabolism. In the presence of D-glucose, activates expression of the gene encoding the gluconate dehydratase (gad), which is involved in D-glucose catabolism via the semiphosphorylative Entner-Doudoroff (spED) pathway. In the presence of D-fructose, activates expression of the genes encoding the PTS system EIIC component (ptfC) and the fructose-1,6-bisphosphate aldolase (fba), which are involved in D-fructose uptake and degradation via the modified Embden-Meyerhof pathway. In addition, in the presence of D-glucose, D-fructose, D-galactose or glycerol, it activates expression of the genes encoding glyceraldehyde-3-phosphate dehydrogenase (gap) and pyruvate kinase (pykA), enzymes common to all four degradation pathways. Acts by binding directly to the promoter region of the regulated genes. The polypeptide is Transcriptional regulator GfcR (Haloferax volcanii (strain ATCC 29605 / DSM 3757 / JCM 8879 / NBRC 14742 / NCIMB 2012 / VKM B-1768 / DS2) (Halobacterium volcanii)).